A 213-amino-acid polypeptide reads, in one-letter code: MNNLSYFTKTKLVWVILSLSLLSACATKTPDNLIPVQVNHVSQAQAWEMQGKLAVRTADDKFSTNLYWLHTADINELKLTTMLGTTLLSLTTEEGVAKLEVDGKVYQHDDAQELLTEITGWSIPVNALPLWITGQAAQDDKIINQDLQLRPTVLLSEKDSPPWRVEFNSWQKQSGAEIPRLLELTREQLRLKIQISQWQALSATTLATNNQKK.

An N-terminal signal peptide occupies residues 1 to 24 (MNNLSYFTKTKLVWVILSLSLLSA). Cysteine 25 is lipidated: N-palmitoyl cysteine. A lipid anchor (S-diacylglycerol cysteine) is attached at cysteine 25.

This sequence belongs to the LolB family. As to quaternary structure, monomer.

The protein localises to the cell outer membrane. Plays a critical role in the incorporation of lipoproteins in the outer membrane after they are released by the LolA protein. The sequence is that of Outer-membrane lipoprotein LolB from Shewanella woodyi (strain ATCC 51908 / MS32).